The primary structure comprises 273 residues: Bis(5'-nucleosyl)-tetraphosphatase, symmetrical (273 aa).

Belongs to the Ap4A hydrolase family.

It carries out the reaction P(1),P(4)-bis(5'-adenosyl) tetraphosphate + H2O = 2 ADP + 2 H(+). Its function is as follows. Hydrolyzes diadenosine 5',5'''-P1,P4-tetraphosphate to yield ADP. The sequence is that of Bis(5'-nucleosyl)-tetraphosphatase, symmetrical from Histophilus somni (strain 2336) (Haemophilus somnus).